Here is a 233-residue protein sequence, read N- to C-terminus: Large ribosomal subunit protein uL1 (233 aa).

The protein belongs to the universal ribosomal protein uL1 family. In terms of assembly, part of the 50S ribosomal subunit.

In terms of biological role, binds directly to 23S rRNA. The L1 stalk is quite mobile in the ribosome, and is involved in E site tRNA release. Its function is as follows. Protein L1 is also a translational repressor protein, it controls the translation of the L11 operon by binding to its mRNA. The polypeptide is Large ribosomal subunit protein uL1 (Geobacillus stearothermophilus (Bacillus stearothermophilus)).